The chain runs to 62 residues: UPF0434 protein BP2767 (62 aa).

Belongs to the UPF0434 family.

The polypeptide is UPF0434 protein BP2767 (Bordetella pertussis (strain Tohama I / ATCC BAA-589 / NCTC 13251)).